Reading from the N-terminus, the 279-residue chain is Tryptophan 2,3-dioxygenase (279 aa).

Residues 48–52 (FIVIH), Y110, and R114 each bind substrate. Heme is bound at residue H237. Substrate is bound at residue T251.

It belongs to the tryptophan 2,3-dioxygenase family. Homotetramer. Requires heme as cofactor.

The enzyme catalyses L-tryptophan + O2 = N-formyl-L-kynurenine. It participates in amino-acid degradation; L-tryptophan degradation via kynurenine pathway; L-kynurenine from L-tryptophan: step 1/2. Its function is as follows. Heme-dependent dioxygenase that catalyzes the oxidative cleavage of the L-tryptophan (L-Trp) pyrrole ring and converts L-tryptophan to N-formyl-L-kynurenine. Catalyzes the oxidative cleavage of the indole moiety. The sequence is that of Tryptophan 2,3-dioxygenase from Exiguobacterium sibiricum (strain DSM 17290 / CCUG 55495 / CIP 109462 / JCM 13490 / 255-15).